Here is a 291-residue protein sequence, read N- to C-terminus: MTRSYLPLNSLRAFEAAARHLSFTHAAIELNVTHSAISQHVKTLEQHLNCQLFVRVSRGLMLTTEGENLLPVLNDSFDRIAGMLDRFANHRAQEKLKIGVVGTFATGVLFSQLEDFRRGYPHIDLQLSTHNNRVDPAAEGLDYTIRYGGGAWHGTEAEFLCHAPLAPLCTPDIAASLHSPADILRFTLLRSYRRDEWTAWMQAAGEHPPSPTHRVMVFDSSVTMLEAAQAGVGIAIAPVDMFTHLLASERIVQPFATQIELGSYWLTRLQSRAETPAMREFSRWLVEKMKK.

The region spanning leucine 6 to threonine 63 is the HTH lysR-type domain. The segment at residues phenylalanine 23–lysine 42 is a DNA-binding region (H-T-H motif).

This sequence belongs to the LysR transcriptional regulatory family.

It localises to the cytoplasm. This protein is a positive regulator of gene expression of cephalosporinase (AmpC). This is HTH-type transcriptional activator AmpR (ampR) from Enterobacter cloacae.